Consider the following 226-residue polypeptide: Uracil-DNA glycosylase (226 aa).

The active-site Proton acceptor is D65.

This sequence belongs to the uracil-DNA glycosylase (UDG) superfamily. UNG family.

It localises to the cytoplasm. The enzyme catalyses Hydrolyzes single-stranded DNA or mismatched double-stranded DNA and polynucleotides, releasing free uracil.. Excises uracil residues from the DNA which can arise as a result of misincorporation of dUMP residues by DNA polymerase or due to deamination of cytosine. This chain is Uracil-DNA glycosylase, found in Enterococcus faecalis (strain ATCC 700802 / V583).